The sequence spans 688 residues: NADPH-dependent diflavin oxidoreductase 1 (688 aa).

Positions 26–76 (HLHRHADTSPTNQHNTSHKMTTTEPIHVTTGSGESRDHTEPRHVTPTSPNA) are disordered. Over residues 33–58 (TSPTNQHNTSHKMTTTEPIHVTTGSG) the composition is skewed to polar residues. Residues 59-68 (ESRDHTEPRH) are compositionally biased toward basic and acidic residues. The 146-residue stretch at 82–227 (ITIAYATETG…MYNEWQARFC (146 aa)) folds into the Flavodoxin-like domain. Residues 88 to 93 (TETGNA), 136 to 139 (STTG), 174 to 183 (LGDSSYPRFN), and D209 each bind FMN. Residues 277–543 (KDVLQGTVVG…KHSTPIPDLD (267 aa)) enclose the FAD-binding FR-type domain. FAD is bound by residues R453, 483–486 (RLFS), and 515–518 (GVLT). NADP(+)-binding positions include T554, 607–608 (SR), and 613–617 (GGYVQ). W688 serves as a coordination point for FAD.

It belongs to the NADPH-dependent diflavin oxidoreductase NDOR1 family. The protein in the N-terminal section; belongs to the flavodoxin family. This sequence in the C-terminal section; belongs to the flavoprotein pyridine nucleotide cytochrome reductase family. In terms of assembly, interacts with DRE2; as part of the cytosolic iron-sulfur (Fe-S) protein assembly (CIA) machinery. The cofactor is FAD. FMN is required as a cofactor.

The protein localises to the cytoplasm. Its subcellular location is the mitochondrion. It carries out the reaction 2 oxidized [2Fe-2S]-[protein] + NADPH = 2 reduced [2Fe-2S]-[protein] + NADP(+) + H(+). Its function is as follows. NADPH-dependent reductase which is a central component of the cytosolic iron-sulfur (Fe-S) protein assembly (CIA) machinery. Transfers electrons from NADPH via its FAD and FMN prosthetic groups to the [2Fe-2S] cluster of DRE2, another key component of the CIA machinery. In turn, this reduced cluster provides electrons for assembly of cytosolic iron-sulfur cluster proteins. Positively controls H(2)O(2)-induced cell death. The chain is NADPH-dependent diflavin oxidoreductase 1 from Yarrowia lipolytica (strain CLIB 122 / E 150) (Yeast).